We begin with the raw amino-acid sequence, 61 residues long: Double gene block protein 2 (61 aa).

The Cytoplasmic portion of the chain corresponds to 1 to 12 (MACCRCDSSPGD). A helical; Signal-anchor for type II membrane protein membrane pass occupies residues 13–33 (YSGALLILFISFVFFYITSLS). At 34 to 61 (PQGNTYVHHFDSSSVKTQYVGISTNGDG) the chain is on the lumenal side.

It belongs to the gammacarmovirus double gene block protein 2 family.

The protein resides in the host endoplasmic reticulum membrane. Its function is as follows. Cell-to-cell movement function. The protein is Double gene block protein 2 of Melon necrotic spot virus (MNSV).